A 1076-amino-acid chain; its full sequence is Regulator of G-protein signaling protein-like (1076 aa).

Residues 645–764 enclose the RGS domain; sequence NLTEVLLNTQ…LFPPHHQEVE (120 aa). Residues 834 to 852 are compositionally biased toward polar residues; that stretch reads TTAHNTSGRSAPPSTNVRS. The disordered stretch occupies residues 834–854; that stretch reads TTAHNTSGRSAPPSTNVRSAD. Residues 960–982 form a helical membrane-spanning segment; the sequence is VFHGAIMSVFPVVMYFWKRFCFW.

The protein resides in the membrane. This is Regulator of G-protein signaling protein-like (RGSL1) from Homo sapiens (Human).